A 198-amino-acid polypeptide reads, in one-letter code: Nucleoside triphosphate pyrophosphatase (198 aa).

The active-site Proton acceptor is Asp72.

This sequence belongs to the Maf family. A divalent metal cation serves as cofactor.

Its subcellular location is the cytoplasm. It catalyses the reaction a ribonucleoside 5'-triphosphate + H2O = a ribonucleoside 5'-phosphate + diphosphate + H(+). The enzyme catalyses a 2'-deoxyribonucleoside 5'-triphosphate + H2O = a 2'-deoxyribonucleoside 5'-phosphate + diphosphate + H(+). Nucleoside triphosphate pyrophosphatase. May have a dual role in cell division arrest and in preventing the incorporation of modified nucleotides into cellular nucleic acids. The chain is Nucleoside triphosphate pyrophosphatase from Corynebacterium aurimucosum (strain ATCC 700975 / DSM 44827 / CIP 107346 / CN-1) (Corynebacterium nigricans).